We begin with the raw amino-acid sequence, 302 residues long: Eukaryotic translation initiation factor 3 subunit F (302 aa).

An MPN domain is found at 23-165 (IVIEPAVLFS…IKTYVSSPVG (143 aa)). Phosphoserine is present on S162.

The protein belongs to the eIF-3 subunit F family. In terms of assembly, component of the eukaryotic translation initiation factor 3 (eIF-3) complex. The eIF-3 complex appears to include tif32/eif3a, SPAC25G10.08/eif3b, tif33/eif3c, SPBC4C3.07/eif3f, tif35/eif3g and sum1/eif3i. This set of common subunits may also associate exclusively with either moe1/eif3d and int6/eif3e, or with SPAC821.05/eif3h and SPAC1751.03/eif3m. The eIF-3 complex may also include SPAC3A12.13c/eif3j.

The protein resides in the cytoplasm. In terms of biological role, component of the eukaryotic translation initiation factor 3 (eIF-3) complex, which is involved in protein synthesis of a specialized repertoire of mRNAs and, together with other initiation factors, stimulates binding of mRNA and methionyl-tRNAi to the 40S ribosome. The eIF-3 complex specifically targets and initiates translation of a subset of mRNAs involved in cell proliferation. The polypeptide is Eukaryotic translation initiation factor 3 subunit F (Schizosaccharomyces pombe (strain 972 / ATCC 24843) (Fission yeast)).